Reading from the N-terminus, the 274-residue chain is Bis(5'-nucleosyl)-tetraphosphatase, symmetrical (274 aa).

The protein belongs to the Ap4A hydrolase family.

It carries out the reaction P(1),P(4)-bis(5'-adenosyl) tetraphosphate + H2O = 2 ADP + 2 H(+). Functionally, hydrolyzes diadenosine 5',5'''-P1,P4-tetraphosphate to yield ADP. This chain is Bis(5'-nucleosyl)-tetraphosphatase, symmetrical, found in Shewanella baltica (strain OS185).